The primary structure comprises 267 residues: Ribosomal RNA small subunit methyltransferase A (267 aa).

Asn18, Leu20, Gly45, Glu66, Asp91, and Asn112 together coordinate S-adenosyl-L-methionine.

Belongs to the class I-like SAM-binding methyltransferase superfamily. rRNA adenine N(6)-methyltransferase family. RsmA subfamily.

Its subcellular location is the cytoplasm. The enzyme catalyses adenosine(1518)/adenosine(1519) in 16S rRNA + 4 S-adenosyl-L-methionine = N(6)-dimethyladenosine(1518)/N(6)-dimethyladenosine(1519) in 16S rRNA + 4 S-adenosyl-L-homocysteine + 4 H(+). Specifically dimethylates two adjacent adenosines (A1518 and A1519) in the loop of a conserved hairpin near the 3'-end of 16S rRNA in the 30S particle. May play a critical role in biogenesis of 30S subunits. In Shewanella amazonensis (strain ATCC BAA-1098 / SB2B), this protein is Ribosomal RNA small subunit methyltransferase A.